The sequence spans 108 residues: uncharacterized protein (108 aa).

Residues 64-84 form a helical membrane-spanning segment; that stretch reads LFIIYYYYYLLICLSPHFFPI.

It localises to the membrane. This is an uncharacterized protein from Schizosaccharomyces pombe (strain 972 / ATCC 24843) (Fission yeast).